The following is a 227-amino-acid chain: MNTWMNFNLQNSNSPLMEQLMFFHNHSMLIILLITILVGYIMSSLLYNKLYNRYLLESQNVEIIWTILPAFMLIFIALPSLRLLYLLDDSNSPLISLKAIGHQWYWSYEYTDFNNISFDSYMIPSNELNLNSFRLLDVDNRIILPINSQIRILITATDVLHSWTIPSLGIKIDATPGRLNQSNFMMNRPGLYFGQCSEICGANHSFMPIVIESILINSFIKWISSNS.

At 1 to 26 the chain is on the mitochondrial intermembrane side; it reads MNTWMNFNLQNSNSPLMEQLMFFHNH. The helical transmembrane segment at 27–48 threads the bilayer; it reads SMLIILLITILVGYIMSSLLYN. The Mitochondrial matrix segment spans residues 49-62; it reads KLYNRYLLESQNVE. The chain crosses the membrane as a helical span at residues 63–82; it reads IIWTILPAFMLIFIALPSLR. At 83–227 the chain is on the mitochondrial intermembrane side; it reads LLYLLDDSNS…SFIKWISSNS (145 aa). Positions 161, 196, 198, 200, 204, and 207 each coordinate Cu cation. Glu198 lines the Mg(2+) pocket.

This sequence belongs to the cytochrome c oxidase subunit 2 family. In terms of assembly, component of the cytochrome c oxidase (complex IV, CIV), a multisubunit enzyme composed of a catalytic core of 3 subunits and several supernumerary subunits. The complex exists as a monomer or a dimer and forms supercomplexes (SCs) in the inner mitochondrial membrane with ubiquinol-cytochrome c oxidoreductase (cytochrome b-c1 complex, complex III, CIII). Requires Cu cation as cofactor.

It is found in the mitochondrion inner membrane. The enzyme catalyses 4 Fe(II)-[cytochrome c] + O2 + 8 H(+)(in) = 4 Fe(III)-[cytochrome c] + 2 H2O + 4 H(+)(out). Component of the cytochrome c oxidase, the last enzyme in the mitochondrial electron transport chain which drives oxidative phosphorylation. The respiratory chain contains 3 multisubunit complexes succinate dehydrogenase (complex II, CII), ubiquinol-cytochrome c oxidoreductase (cytochrome b-c1 complex, complex III, CIII) and cytochrome c oxidase (complex IV, CIV), that cooperate to transfer electrons derived from NADH and succinate to molecular oxygen, creating an electrochemical gradient over the inner membrane that drives transmembrane transport and the ATP synthase. Cytochrome c oxidase is the component of the respiratory chain that catalyzes the reduction of oxygen to water. Electrons originating from reduced cytochrome c in the intermembrane space (IMS) are transferred via the dinuclear copper A center (CU(A)) of subunit 2 and heme A of subunit 1 to the active site in subunit 1, a binuclear center (BNC) formed by heme A3 and copper B (CU(B)). The BNC reduces molecular oxygen to 2 water molecules using 4 electrons from cytochrome c in the IMS and 4 protons from the mitochondrial matrix. In Ctenocephalides felis (Cat flea), this protein is Cytochrome c oxidase subunit 2 (COII).